The following is an 84-amino-acid chain: NAD(P)H-quinone oxidoreductase subunit O (84 aa).

It belongs to the complex I NdhO subunit family. NDH-1 can be composed of about 15 different subunits; different subcomplexes with different compositions have been identified which probably have different functions.

The protein localises to the cellular thylakoid membrane. It catalyses the reaction a plastoquinone + NADH + (n+1) H(+)(in) = a plastoquinol + NAD(+) + n H(+)(out). The enzyme catalyses a plastoquinone + NADPH + (n+1) H(+)(in) = a plastoquinol + NADP(+) + n H(+)(out). In terms of biological role, NDH-1 shuttles electrons from an unknown electron donor, via FMN and iron-sulfur (Fe-S) centers, to quinones in the respiratory and/or the photosynthetic chain. The immediate electron acceptor for the enzyme in this species is believed to be plastoquinone. Couples the redox reaction to proton translocation, and thus conserves the redox energy in a proton gradient. Cyanobacterial NDH-1 also plays a role in inorganic carbon-concentration. This Parasynechococcus marenigrum (strain WH8102) protein is NAD(P)H-quinone oxidoreductase subunit O.